A 147-amino-acid chain; its full sequence is Ribosome-binding factor A (147 aa).

Positions 123–147 (LAKLKEGAQPAGDANPYKTSDEEED) are disordered.

This sequence belongs to the RbfA family. In terms of assembly, monomer. Binds 30S ribosomal subunits, but not 50S ribosomal subunits or 70S ribosomes.

The protein resides in the cytoplasm. Its function is as follows. One of several proteins that assist in the late maturation steps of the functional core of the 30S ribosomal subunit. Associates with free 30S ribosomal subunits (but not with 30S subunits that are part of 70S ribosomes or polysomes). Required for efficient processing of 16S rRNA. May interact with the 5'-terminal helix region of 16S rRNA. The chain is Ribosome-binding factor A from Corynebacterium aurimucosum (strain ATCC 700975 / DSM 44827 / CIP 107346 / CN-1) (Corynebacterium nigricans).